The following is a 152-amino-acid chain: Endoribonuclease YbeY (152 aa).

Residues H117, H121, and H127 each contribute to the Zn(2+) site.

Belongs to the endoribonuclease YbeY family. Zn(2+) serves as cofactor.

The protein resides in the cytoplasm. Single strand-specific metallo-endoribonuclease involved in late-stage 70S ribosome quality control and in maturation of the 3' terminus of the 16S rRNA. The protein is Endoribonuclease YbeY of Sulfurihydrogenibium sp. (strain YO3AOP1).